Consider the following 223-residue polypeptide: Large ribosomal subunit protein bL21 (223 aa).

The segment at 110-149 (TALKSTTAEPKAADAPKAKAKAAPKAEKAAAPKAEKAPAK) is disordered. The segment covering 133-147 (PKAEKAAAPKAEKAP) has biased composition (basic and acidic residues).

Belongs to the bacterial ribosomal protein bL21 family. Part of the 50S ribosomal subunit. Contacts protein L20.

In terms of biological role, this protein binds to 23S rRNA in the presence of protein L20. The protein is Large ribosomal subunit protein bL21 of Maricaulis maris (strain MCS10) (Caulobacter maris).